Here is a 431-residue protein sequence, read N- to C-terminus: Glutamate-1-semialdehyde 2,1-aminomutase 2 (431 aa).

K268 is subject to N6-(pyridoxal phosphate)lysine.

This sequence belongs to the class-III pyridoxal-phosphate-dependent aminotransferase family. HemL subfamily. In terms of assembly, homodimer. Pyridoxal 5'-phosphate serves as cofactor.

The protein localises to the cytoplasm. The enzyme catalyses (S)-4-amino-5-oxopentanoate = 5-aminolevulinate. It participates in porphyrin-containing compound metabolism; protoporphyrin-IX biosynthesis; 5-aminolevulinate from L-glutamyl-tRNA(Glu): step 2/2. This is Glutamate-1-semialdehyde 2,1-aminomutase 2 from Anoxybacillus flavithermus (strain DSM 21510 / WK1).